We begin with the raw amino-acid sequence, 112 residues long: UPF0060 membrane protein SAV_4756 (112 aa).

4 helical membrane-spanning segments follow: residues Ala8–Val28, Gly33–Leu53, Ile62–Asp82, and Val91–Gly111.

The protein belongs to the UPF0060 family.

The protein localises to the cell membrane. This chain is UPF0060 membrane protein SAV_4756, found in Streptomyces avermitilis (strain ATCC 31267 / DSM 46492 / JCM 5070 / NBRC 14893 / NCIMB 12804 / NRRL 8165 / MA-4680).